The sequence spans 1441 residues: Histone-lysine N-methyltransferase SETD5 (1441 aa).

Positions 1–28 (MSIAIPLGVTTPDTSYSDMAAGSDPESV) are disordered. Leucine 70 carries the phosphothreonine modification. A phosphoserine mark is found at serine 72 and valine 74. The interval 156 to 202 (TPTSITLTVRRTKPKKRKKSPEKGRAAPKTKKIKNSPSEAQNLDENT) is disordered. The span at 165 to 189 (RRTKPKKRKKSPEKGRAAPKTKKIK) shows a compositional bias: basic residues. Residues 190–202 (NSPSEAQNLDENT) show a composition bias toward polar residues. The 122-residue stretch at 269-390 (MQLQLGRVTR…KDAEVTIAFD (122 aa)) folds into the SET domain. 2 disordered regions span residues 417 to 683 (NPNA…TVIS) and 793 to 816 (MTQT…ETSN). 2 stretches are compositionally biased toward acidic residues: residues 450–461 (LEQQNEVPEENP) and 479–501 (EEVD…DDQE). Low complexity-rich tracts occupy residues 539–552 (SSSD…SSEI) and 561–572 (AAPESEVSSPVS). Residues 575-588 (AIPSTPQSTGVNTR) are compositionally biased toward polar residues. Residues 611 to 621 (SRPRPKSRISR) show a composition bias toward basic residues. Positions 635–650 (QAIAQQAELSQAALEE) are enriched in low complexity. Over residues 652–683 (GSNNSVTPPEAGNTDSSGENRQLTGSDPTVIS) the composition is skewed to polar residues. Phosphoserine is present on residues serine 829 and serine 852. Disordered regions lie at residues 849–883 (QPLS…ECRN), 1036–1228 (DLSR…SKGA), and 1243–1441 (CDSP…TGLS). At threonine 855 the chain carries Phosphothreonine. Over residues 1062–1076 (QRKKVSLLEYRKRKQ) the composition is skewed to basic residues. Residues 1087-1107 (DSSQSKSKSSGAGQGSSNSVS) show a composition bias toward low complexity. A compositionally biased stretch (polar residues) spans 1144–1163 (PSDSRGTSSSHCRPQENISS). Serine 1197 carries the post-translational modification Phosphoserine. A compositionally biased stretch (low complexity) spans 1250 to 1259 (SQSLLQQSSS). Polar residues predominate over residues 1265–1275 (PTQSPGYSYRT). The segment covering 1284–1300 (PSHGSSESSLSSTSYPS) has biased composition (low complexity). Over residues 1319–1333 (YYSSQPHSGNSTGSN) the composition is skewed to polar residues. Residues 1335 to 1372 (PRRSCSSSAASPTPQGPSDSPTSDSVSQSSTGTLSSTS) are compositionally biased toward low complexity. 3 stretches are compositionally biased toward polar residues: residues 1373 to 1382 (FPQNSRSSLP), 1389 to 1412 (SLPN…NSQH), and 1429 to 1441 (LQGS…TGLS).

Interacts with components of the PAF1 complex (PAF1C) such as LEO1, CTR9 and CDC73. Interacts with NCOR1. Interacts with HDAC3. As to expression, ubiquitously expressed.

Its subcellular location is the nucleus. It localises to the chromosome. The catalysed reaction is L-lysyl(9)-[histone H3] + S-adenosyl-L-methionine = N(6)-methyl-L-lysyl(9)-[histone H3] + S-adenosyl-L-homocysteine + H(+). It carries out the reaction L-lysyl(36)-[histone H3] + 3 S-adenosyl-L-methionine = N(6),N(6),N(6)-trimethyl-L-lysyl(36)-[histone H3] + 3 S-adenosyl-L-homocysteine + 3 H(+). In terms of biological role, chromatin regulator required for brain development: acts as a regulator of RNA elongation rate, thereby regulating neural stem cell (NSC) proliferation and synaptic transmission. May act by mediating trimethylation of 'Lys-36' of histone H3 (H3K36me3), which is essential to allow on-time RNA elongation dynamics. Also monomethylates 'Lys-9' of histone H3 (H3K9me1) in vitro. The relevance of histone methyltransferase activity is however subject to discussion. The sequence is that of Histone-lysine N-methyltransferase SETD5 from Mus musculus (Mouse).